The sequence spans 654 residues: U-box domain-containing protein 12 (654 aa).

Residues Ile-255–Glu-329 enclose the U-box domain. Positions Glu-329–Asp-352 are disordered. A compositionally biased stretch (low complexity) spans Ser-337–Ala-349. ARM repeat units follow at residues Asn-387 to Ile-427, Glu-430 to Val-469, Asp-471 to Ile-510, Gln-512 to Ser-551, and Pro-553 to Ser-592.

The enzyme catalyses S-ubiquitinyl-[E2 ubiquitin-conjugating enzyme]-L-cysteine + [acceptor protein]-L-lysine = [E2 ubiquitin-conjugating enzyme]-L-cysteine + N(6)-ubiquitinyl-[acceptor protein]-L-lysine.. The protein operates within protein modification; protein ubiquitination. In terms of biological role, functions as an E3 ubiquitin ligase. The polypeptide is U-box domain-containing protein 12 (PUB12) (Arabidopsis thaliana (Mouse-ear cress)).